The following is an 803-amino-acid chain: MTGLEEDQEFDFDFLFEFNQSDEGAVAAPAEHYGYAAPGLGAGLPLSAAHPSLPAPCHDLQSSAAGVSAVGYGGTVDSGPSGYFLSSGGIRPNGAPALESPRIEITSYLGLHHNSSQFLHEVDVEDVLPKRSPSTATLNLPSLEAYRDPSCLSPASSLSSRSCNSEASSYESSFSYPYASPQTSPWQSPCVSPKTTDPEEGFARGLGACGLLGSPRHSPSTSPRTSVTEESWLGARTSRPSSPCNKRKYGLNGRQLSCSPHPSPTPSPQGSPRVSVTDDTWLGNTTQYTSSAIVAAINALSTDSSLDLGDGVPVKARKTTLDHSPAVALKVEPAGEDLGTTPPTPDFQPEEFAAFQHIRKGAFCDQYLSVPQHPYPWARPRSPASYTSPSLPALDWQLPSHSGPYELRIEVQPKSHHRAHYETEGSRGAVKASAGGHPSVQLHGYVESEPLTLQLFIGTADDRLLRPHAFYQVHRITGKTVSTASHEAVVCSTKVLEIPLLPENNMRATIDCAGILKLRNSDIELRKGETDIGRKNTRVRLVFRVHIPQPNGRTLSLQVASNPIECSQRSAQELPLVEKQSAASGPVLGGKRMVLSGHNFLQDSKVIFVEKAPDGHHIWEMEAKTEGDLCKPNSLVVEIPPFRNQRITSPVQVNFYVCNGKRKRSQYQHFTYLPANVPIIKTEPSDDYEPALTCGPMSQGLSPLPKPCYGQPLALPPDPGACLMPGFPPRPQGSASPELHDLSCAPYGSATAGPGHSPLGLPRPVGGVLASQEAPRPSGVPPGPPQPPPPTLLQPQVSPTSSG.

A calcineurin-binding region spans residues 101–106; sequence PRIEIT. Positions 109–199 are transactivation domain A (TAD-A); sequence LGLHHNSSQF…CVSPKTTDPE (91 aa). A compositionally biased stretch (polar residues) spans 181-195; it reads PQTSPWQSPCVSPKT. Positions 181-279 are disordered; it reads PQTSPWQSPC…GSPRVSVTDD (99 aa). Tandem repeats lie at residues 184–200 and 214–230. A 3 X SP repeats region spans residues 184-279; sequence SPWQSPCVSP…GSPRVSVTDD (96 aa). Phosphoserine occurs at positions 214 and 218. The span at 214-231 shows a compositional bias: low complexity; sequence SPRHSPSTSPRTSVTEES. S226 is modified (phosphoserine; by PKA). The Nuclear localization signal signature appears at 246-248; the sequence is KRK. The stretch at 263-279 is repeat 3; sequence SPTPSPQGSPRVSVTDD. S275 carries the post-translational modification Phosphoserine; by PKA. The Nuclear export signal signature appears at 291-302; that stretch reads SAIVAAINALST. The 183-residue stretch at 389–571 folds into the RHD domain; it reads PSLPALDWQL…NPIECSQRSA (183 aa). The DNA-binding element occupies 418–425; that stretch reads RAHYETEG. The Nuclear localization signal signature appears at 661-663; that stretch reads KRK. The tract at residues 723–803 is disordered; the sequence is LMPGFPPRPQ…QPQVSPTSSG (81 aa). Residues 778–792 show a composition bias toward pro residues; that stretch reads SGVPPGPPQPPPPTL. The segment covering 793-803 has biased composition (low complexity); the sequence is LQPQVSPTSSG.

In terms of assembly, member of the multicomponent NFATC transcription complex that consists of at least two components, a pre-existing cytoplasmic component NFATC2 and an inducible nuclear component NFATC1. Other members such as NFATC4, NFATC3 or members of the activating protein-1 family, MAF, GATA4 and Cbp/p300 can also bind the complex. NFATC proteins bind to DNA as monomers. Interacts with HOMER2 and HOMER3; this interaction may compete with calcineurin/PPP3CA-binding and hence prevent NFATC1 dephosphorylation and activation. Interacts with TLE6/GRG6. Phosphorylated by NFATC-kinase and GSK3B; phosphorylation induces NFATC1 nuclear exit and dephosphorylation by calcineurin promotes nuclear import. Phosphorylation by PKA and DYRK2 negatively modulates nuclear accumulation, and promotes subsequent phosphorylation by GSK3B or casein kinase 1.

It localises to the cytoplasm. The protein localises to the nucleus. Its function is as follows. Plays a role in the inducible expression of cytokine genes in T-cells, especially in the induction of the IL-2 or IL-4 gene transcription. Also controls gene expression in embryonic cardiac cells. Could regulate not only the activation and proliferation but also the differentiation and programmed death of T-lymphocytes as well as lymphoid and non-lymphoid cells. Required for osteoclastogenesis and regulates many genes important for osteoclast differentiation and function. The protein is Nuclear factor of activated T-cells, cytoplasmic 1 of Bos taurus (Bovine).